Consider the following 341-residue polypeptide: Heat-inducible transcription repressor HrcA (341 aa).

It belongs to the HrcA family.

Its function is as follows. Negative regulator of class I heat shock genes (grpE-dnaK-dnaJ and groELS operons). Prevents heat-shock induction of these operons. This chain is Heat-inducible transcription repressor HrcA, found in Corynebacterium jeikeium (strain K411).